Here is a 430-residue protein sequence, read N- to C-terminus: Enolase (430 aa).

Gln-163 is a (2R)-2-phosphoglycerate binding site. Glu-205 (proton donor) is an active-site residue. Mg(2+) is bound by residues Asp-242, Glu-287, and Asp-314. (2R)-2-phosphoglycerate contacts are provided by Lys-339, Arg-368, Ser-369, and Lys-390. Lys-339 acts as the Proton acceptor in catalysis.

It belongs to the enolase family. Requires Mg(2+) as cofactor.

The protein localises to the cytoplasm. Its subcellular location is the secreted. It is found in the cell surface. The enzyme catalyses (2R)-2-phosphoglycerate = phosphoenolpyruvate + H2O. The protein operates within carbohydrate degradation; glycolysis; pyruvate from D-glyceraldehyde 3-phosphate: step 4/5. Catalyzes the reversible conversion of 2-phosphoglycerate (2-PG) into phosphoenolpyruvate (PEP). It is essential for the degradation of carbohydrates via glycolysis. This Exiguobacterium sibiricum (strain DSM 17290 / CCUG 55495 / CIP 109462 / JCM 13490 / 255-15) protein is Enolase.